The primary structure comprises 456 residues: tRNA modification GTPase MnmE (456 aa).

The (6S)-5-formyl-5,6,7,8-tetrahydrofolate site is built by Lys29, Glu87, and Arg126. The region spanning 222–380 (GYKLAIIGRP…LLSLLASWLD (159 aa)) is the TrmE-type G domain. Asn232 is a K(+) binding site. GTP contacts are provided by residues 232-237 (NVGKSS), 251-257 (SDIPGTT), and 276-279 (DTAG). A Mg(2+)-binding site is contributed by Ser236. The K(+) site is built by Ser251, Ile253, and Thr256. Position 257 (Thr257) interacts with Mg(2+). Lys456 is a binding site for (6S)-5-formyl-5,6,7,8-tetrahydrofolate.

The protein belongs to the TRAFAC class TrmE-Era-EngA-EngB-Septin-like GTPase superfamily. TrmE GTPase family. As to quaternary structure, homodimer. Heterotetramer of two MnmE and two MnmG subunits. The cofactor is K(+).

Its subcellular location is the cytoplasm. Functionally, exhibits a very high intrinsic GTPase hydrolysis rate. Involved in the addition of a carboxymethylaminomethyl (cmnm) group at the wobble position (U34) of certain tRNAs, forming tRNA-cmnm(5)s(2)U34. The sequence is that of tRNA modification GTPase MnmE from Wolinella succinogenes (strain ATCC 29543 / DSM 1740 / CCUG 13145 / JCM 31913 / LMG 7466 / NCTC 11488 / FDC 602W) (Vibrio succinogenes).